A 332-amino-acid chain; its full sequence is Anthranilate phosphoribosyltransferase (332 aa).

5-phospho-alpha-D-ribose 1-diphosphate contacts are provided by residues Gly79, 82 to 83 (GD), Thr87, 89 to 92 (NIST), 107 to 115 (KHGNRSVSS), and Ser119. Gly79 is an anthranilate binding site. Ser91 is a Mg(2+) binding site. Asn110 is an anthranilate binding site. Arg165 contributes to the anthranilate binding site. The Mg(2+) site is built by Asp223 and Glu224.

It belongs to the anthranilate phosphoribosyltransferase family. In terms of assembly, homodimer. Mg(2+) serves as cofactor.

The enzyme catalyses N-(5-phospho-beta-D-ribosyl)anthranilate + diphosphate = 5-phospho-alpha-D-ribose 1-diphosphate + anthranilate. It participates in amino-acid biosynthesis; L-tryptophan biosynthesis; L-tryptophan from chorismate: step 2/5. In terms of biological role, catalyzes the transfer of the phosphoribosyl group of 5-phosphorylribose-1-pyrophosphate (PRPP) to anthranilate to yield N-(5'-phosphoribosyl)-anthranilate (PRA). This Vibrio vulnificus (strain CMCP6) protein is Anthranilate phosphoribosyltransferase.